A 405-amino-acid polypeptide reads, in one-letter code: Argininosuccinate synthase (405 aa).

ATP contacts are provided by residues Ala10 to Ser18 and Ala37. L-citrulline contacts are provided by Tyr88 and Ser93. Gly118 lines the ATP pocket. Residues Thr120, Asn124, and Asp125 each contribute to the L-aspartate site. L-citrulline is bound at residue Asn124. Positions 128, 179, 188, 264, and 276 each coordinate L-citrulline.

Belongs to the argininosuccinate synthase family. Type 1 subfamily. Homotetramer.

It localises to the cytoplasm. The catalysed reaction is L-citrulline + L-aspartate + ATP = 2-(N(omega)-L-arginino)succinate + AMP + diphosphate + H(+). The protein operates within amino-acid biosynthesis; L-arginine biosynthesis; L-arginine from L-ornithine and carbamoyl phosphate: step 2/3. This Pseudomonas fluorescens (strain SBW25) protein is Argininosuccinate synthase.